A 576-amino-acid polypeptide reads, in one-letter code: Flagellin B (576 aa).

This sequence belongs to the bacterial flagellin family. As to quaternary structure, heteromer of FlaA and FlaB. Interacts with FliW. Interacts with FliS.

It is found in the secreted. It localises to the bacterial flagellum. Its function is as follows. Flagellin is the subunit protein which polymerizes to form the filaments of bacterial flagella. In Campylobacter jejuni subsp. jejuni serotype O:6 (strain 81116 / NCTC 11828), this protein is Flagellin B (flaB).